The primary structure comprises 186 residues: dCTP deaminase, dUMP-forming (186 aa).

DCTP is bound by residues 99-104, aspartate 117, 125-127, glutamine 146, tyrosine 159, lysine 166, and glutamine 170; these read KSSIAR and TLE. Glutamate 127 serves as the catalytic Proton donor/acceptor.

This sequence belongs to the dCTP deaminase family. As to quaternary structure, homotrimer.

The catalysed reaction is dCTP + 2 H2O = dUMP + NH4(+) + diphosphate. Its pathway is pyrimidine metabolism; dUMP biosynthesis; dUMP from dCTP: step 1/1. Its function is as follows. Bifunctional enzyme that catalyzes both the deamination of dCTP to dUTP and the hydrolysis of dUTP to dUMP without releasing the toxic dUTP intermediate. This Methanosphaerula palustris (strain ATCC BAA-1556 / DSM 19958 / E1-9c) protein is dCTP deaminase, dUMP-forming.